We begin with the raw amino-acid sequence, 670 residues long: UvrABC system protein B (670 aa).

Residues 25 to 412 (EGLEAGLSHQ…AGRVIEQVVR (388 aa)) enclose the Helicase ATP-binding domain. 38–45 (GVTGSGKT) provides a ligand contact to ATP. The Beta-hairpin motif lies at 91–114 (YYDYYQPEAYVPSSDTYIEKDSSI). One can recognise a Helicase C-terminal domain in the interval 429 to 582 (QVDDLLSQIR…QIAFNEAHGI (154 aa)). In terms of domain architecture, UVR spans 631 to 666 (SKRIRQLEEKMYQLARDLEFEAAAQLRDEIQTLRER).

This sequence belongs to the UvrB family. Forms a heterotetramer with UvrA during the search for lesions. Interacts with UvrC in an incision complex.

The protein resides in the cytoplasm. The UvrABC repair system catalyzes the recognition and processing of DNA lesions. A damage recognition complex composed of 2 UvrA and 2 UvrB subunits scans DNA for abnormalities. Upon binding of the UvrA(2)B(2) complex to a putative damaged site, the DNA wraps around one UvrB monomer. DNA wrap is dependent on ATP binding by UvrB and probably causes local melting of the DNA helix, facilitating insertion of UvrB beta-hairpin between the DNA strands. Then UvrB probes one DNA strand for the presence of a lesion. If a lesion is found the UvrA subunits dissociate and the UvrB-DNA preincision complex is formed. This complex is subsequently bound by UvrC and the second UvrB is released. If no lesion is found, the DNA wraps around the other UvrB subunit that will check the other stand for damage. This is UvrABC system protein B from Pseudomonas aeruginosa (strain ATCC 15692 / DSM 22644 / CIP 104116 / JCM 14847 / LMG 12228 / 1C / PRS 101 / PAO1).